Here is a 514-residue protein sequence, read N- to C-terminus: Cilia- and flagella-associated protein 53 (514 aa).

A coiled-coil region spans residues 207–429 (EDRLAKERRE…ERINEGLKEL (223 aa)).

This sequence belongs to the CFAP53 family. Microtubule inner protein component of sperm flagellar doublet microtubules. Interacts with PIERCE1 and PIERCE2; the interactions link outer dynein arms docking complex (ODA-DC) to the internal microtubule inner proteins (MIP) in cilium axoneme. Interacts with CCDC38. Interacts with CCDC42 and IFT88. Interacts with centriolar satellite proteins PIBF1/CEP90 and PCM1. Interacts with dyneins DNAIC1, DNAIC2 AND DNAH11 and with ODA-DC component ODAD4/TTC25. As to expression, expressed in trachea multiciliated cells.

The protein localises to the cytoplasm. It localises to the cytoskeleton. The protein resides in the cilium axoneme. It is found in the flagellum axoneme. Its subcellular location is the microtubule organizing center. The protein localises to the centrosome. It localises to the centriolar satellite. The protein resides in the spindle pole. Microtubule inner protein (MIP) part of the dynein-decorated doublet microtubules (DMTs) in cilia axoneme, which is required for motile cilia beating. Regulates motility patterns of both 9+0 and 9+2 motile cilia through differential localization and recruitment of axonemal dynein components. Required for centriolar satellite integrity and non-motile cilium assembly. Required for motile cilium formation. Through its role in beating of primary cilia, involved in the establishment of organ laterality during embryogenesis. Required for sperm flagellum biogenesis and is essential for male fertility. This Bos taurus (Bovine) protein is Cilia- and flagella-associated protein 53 (CFAP53).